Here is a 227-residue protein sequence, read N- to C-terminus: uncharacterized protein (227 aa).

The next 7 membrane-spanning stretches (helical) occupy residues 25–45 (LLGF…NAGF), 49–69 (AAFG…YGMI), 80–100 (TGVT…GPVL), 111–131 (KIVG…SALA), 144–164 (FLTV…FLGI), 165–185 (PALA…MIMW), and 201–221 (AALT…NILL).

It localises to the cell membrane. This is an uncharacterized protein from Neisseria meningitidis serogroup B (strain ATCC BAA-335 / MC58).